A 589-amino-acid polypeptide reads, in one-letter code: Sphingosine-1-phosphate lyase (589 aa).

Over 1–58 the chain is Lumenal; it reads MSGVSNKTVSINGWYGMPIHLLREEGDFAQFMILTINELKIAIHGYLRNTPWYNMLKD. N6 carries N-linked (GlcNAc...) asparagine glycosylation. The helical transmembrane segment at 59-76 threads the bilayer; sequence YLFVIFCYKLISNFFYLL. The Cytoplasmic segment spans residues 77–589; sequence KVYGPVRLAV…LGPGEDTATK (513 aa). Position 380 is an N6-(pyridoxal phosphate)lysine (K380).

Belongs to the group II decarboxylase family. Sphingosine-1-phosphate lyase subfamily. Homodimer. Pyridoxal 5'-phosphate is required as a cofactor. Glycosylated.

The protein resides in the endoplasmic reticulum membrane. It catalyses the reaction sphinganine 1-phosphate = hexadecanal + phosphoethanolamine. The enzyme catalyses (4R)-hydroxysphinganine 1-phosphate = (2R)-hydroxyhexadecanal + phosphoethanolamine. Its pathway is lipid metabolism; sphingolipid metabolism. Sphingosine-1-phosphate lyase that cleaves phosphorylated sphingoid bases (PSBs), such as sphingosine-1-phosphate, into fatty aldehydes and phosphoethanolamine. Prefers C-16 dihydrosphingosine-l-phosphate (DHS-P) as a substrate. Regulates intracellular levels of sphingolipid long-chain base phosphates (LCBPs). Plays a role in the regulation of global responses to nutrient deprivation in yeast. The protein is Sphingosine-1-phosphate lyase of Saccharomyces cerevisiae (strain ATCC 204508 / S288c) (Baker's yeast).